The primary structure comprises 311 residues: Putative pyruvate, phosphate dikinase regulatory protein (311 aa).

Gly-180 to Thr-187 lines the ADP pocket.

The protein belongs to the pyruvate, phosphate/water dikinase regulatory protein family. PDRP subfamily.

The enzyme catalyses N(tele)-phospho-L-histidyl/L-threonyl-[pyruvate, phosphate dikinase] + ADP = N(tele)-phospho-L-histidyl/O-phospho-L-threonyl-[pyruvate, phosphate dikinase] + AMP + H(+). The catalysed reaction is N(tele)-phospho-L-histidyl/O-phospho-L-threonyl-[pyruvate, phosphate dikinase] + phosphate + H(+) = N(tele)-phospho-L-histidyl/L-threonyl-[pyruvate, phosphate dikinase] + diphosphate. In terms of biological role, bifunctional serine/threonine kinase and phosphorylase involved in the regulation of the pyruvate, phosphate dikinase (PPDK) by catalyzing its phosphorylation/dephosphorylation. This is Putative pyruvate, phosphate dikinase regulatory protein from Paramagnetospirillum magneticum (strain ATCC 700264 / AMB-1) (Magnetospirillum magneticum).